The following is a 291-amino-acid chain: Acetyl-coenzyme A carboxylase carboxyl transferase subunit beta (291 aa).

The CoA carboxyltransferase N-terminal domain occupies 23–291 (VWHKCPSCTA…PPDLPVEESV (269 aa)). 4 residues coordinate Zn(2+): Cys-27, Cys-30, Cys-46, and Cys-49. A C4-type zinc finger spans residues 27-49 (CPSCTAVLYRVELERNLEVCPKC).

This sequence belongs to the AccD/PCCB family. Acetyl-CoA carboxylase is a heterohexamer composed of biotin carboxyl carrier protein (AccB), biotin carboxylase (AccC) and two subunits each of ACCase subunit alpha (AccA) and ACCase subunit beta (AccD). It depends on Zn(2+) as a cofactor.

Its subcellular location is the cytoplasm. It catalyses the reaction N(6)-carboxybiotinyl-L-lysyl-[protein] + acetyl-CoA = N(6)-biotinyl-L-lysyl-[protein] + malonyl-CoA. It participates in lipid metabolism; malonyl-CoA biosynthesis; malonyl-CoA from acetyl-CoA: step 1/1. Component of the acetyl coenzyme A carboxylase (ACC) complex. Biotin carboxylase (BC) catalyzes the carboxylation of biotin on its carrier protein (BCCP) and then the CO(2) group is transferred by the transcarboxylase to acetyl-CoA to form malonyl-CoA. This is Acetyl-coenzyme A carboxylase carboxyl transferase subunit beta from Coxiella burnetii (strain Dugway 5J108-111).